The primary structure comprises 147 residues: Transcriptional regulator MraZ (147 aa).

SpoVT-AbrB domains lie at 5–47 and 76–123; these read QQLR…SEKE and TFEI…SKSK.

It belongs to the MraZ family. As to quaternary structure, forms oligomers.

It localises to the cytoplasm. Its subcellular location is the nucleoid. This chain is Transcriptional regulator MraZ, found in Mycoplasmopsis synoviae (strain 53) (Mycoplasma synoviae).